Consider the following 693-residue polypeptide: Polyribonucleotide nucleotidyltransferase (693 aa).

Residues Asp-489 and Asp-495 each coordinate Mg(2+). The KH domain maps to 556–615 (PQIHVMNINPAKIKDVVGRGGATVKGIVEKTGAQIDTSDSGEVKVFAKDKKSMDMAVAMI). One can recognise an S1 motif domain in the interval 625-693 (GQVYKGKIVK…GRVKLSLVAR (69 aa)).

It belongs to the polyribonucleotide nucleotidyltransferase family. In terms of assembly, component of the RNA degradosome, which is a multiprotein complex involved in RNA processing and mRNA degradation. Requires Mg(2+) as cofactor.

The protein resides in the cytoplasm. The enzyme catalyses RNA(n+1) + phosphate = RNA(n) + a ribonucleoside 5'-diphosphate. Functionally, involved in mRNA degradation. Catalyzes the phosphorolysis of single-stranded polyribonucleotides processively in the 3'- to 5'-direction. This is Polyribonucleotide nucleotidyltransferase from Francisella tularensis subsp. tularensis (strain FSC 198).